Consider the following 185-residue polypeptide: Ribosome-recycling factor (185 aa).

It belongs to the RRF family.

The protein localises to the cytoplasm. Its function is as follows. Responsible for the release of ribosomes from messenger RNA at the termination of protein biosynthesis. May increase the efficiency of translation by recycling ribosomes from one round of translation to another. This chain is Ribosome-recycling factor, found in Vibrio parahaemolyticus serotype O3:K6 (strain RIMD 2210633).